The sequence spans 371 residues: MLKFTLHKKDGLARRGTLELNHGKIETPVFMPVGTYGSVKAMNPQNLHDIKAQIILGNTYHLWLRPGLEVIGQFGGLHGFIGWDKPILTDSGGFQVFSLSDMRKLTEEGCTFKSPINGDKLFLSPEISMKIQTVLNSDIAMQLDECTPGEATREQARKSLQMSLRWAERSKKAFEDLKNPNALFGIVQGAMYEDLREESLRGLEQFDFPGLAVGGLSVGEPKPEMYRMLRAVGPILPEHKPHYLMGVGTPEDLVYGVAHGIDMFDCVMPTRNARNGWLFTRFGDLKIKNAKHKLDKRPIDESCTCYACQNFSRAYLHHLHRTGEILGAQLNTIHNLHFYQVIMAEMREAVEQGKFADWQARFHENRARGTD.

Aspartate 90 (proton acceptor) is an active-site residue. Residues 90–94 (DSGGF), aspartate 144, glutamine 188, and glycine 215 contribute to the substrate site. Positions 246–252 (GVGTPED) are RNA binding. The active-site Nucleophile is the aspartate 265. The tract at residues 270–274 (TRNAR) is RNA binding; important for wobble base 34 recognition. Cysteine 303, cysteine 305, cysteine 308, and histidine 334 together coordinate Zn(2+).

This sequence belongs to the queuine tRNA-ribosyltransferase family. Homodimer. Within each dimer, one monomer is responsible for RNA recognition and catalysis, while the other monomer binds to the replacement base PreQ1. It depends on Zn(2+) as a cofactor.

The catalysed reaction is 7-aminomethyl-7-carbaguanine + guanosine(34) in tRNA = 7-aminomethyl-7-carbaguanosine(34) in tRNA + guanine. It functions in the pathway tRNA modification; tRNA-queuosine biosynthesis. Functionally, catalyzes the base-exchange of a guanine (G) residue with the queuine precursor 7-aminomethyl-7-deazaguanine (PreQ1) at position 34 (anticodon wobble position) in tRNAs with GU(N) anticodons (tRNA-Asp, -Asn, -His and -Tyr). Catalysis occurs through a double-displacement mechanism. The nucleophile active site attacks the C1' of nucleotide 34 to detach the guanine base from the RNA, forming a covalent enzyme-RNA intermediate. The proton acceptor active site deprotonates the incoming PreQ1, allowing a nucleophilic attack on the C1' of the ribose to form the product. After dissociation, two additional enzymatic reactions on the tRNA convert PreQ1 to queuine (Q), resulting in the hypermodified nucleoside queuosine (7-(((4,5-cis-dihydroxy-2-cyclopenten-1-yl)amino)methyl)-7-deazaguanosine). This chain is Queuine tRNA-ribosyltransferase, found in Neisseria meningitidis serogroup B (strain ATCC BAA-335 / MC58).